The sequence spans 428 residues: E3 ubiquitin-protein ligase RNF128 (428 aa).

The signal sequence occupies residues 1-38 (MGPPPGAGVSCRGGCGFSRLLAWCFLLALSPQAPGSRG). N-linked (GlcNAc...) asparagine glycans are attached at residues N48, N59, and N101. The region spanning 75 to 183 (SPLEPVAGVL…LKGTKILQSI (109 aa)) is the PA domain. A helical membrane pass occupies residues 208 to 228 (IFFVSVSFFIITAATVGYFIF). The segment at 277-318 (CAVCIELYKPNDLVRILTCNHIFHKTCVDPWLLEHRTCPMCK) adopts an RING-type; atypical zinc-finger fold. A disordered region spans residues 346–428 (ISNSASSHEE…QETAVREIKS (83 aa)). The span at 360–371 (ETASSGYASVQG) shows a compositional bias: polar residues.

In terms of processing, auto-ubiquitinated. Controls the development of T-cell clonal anergy by ubiquitination.

It localises to the cytoplasm. The protein resides in the endomembrane system. It is found in the cytoskeleton. The protein localises to the perinuclear region. It catalyses the reaction S-ubiquitinyl-[E2 ubiquitin-conjugating enzyme]-L-cysteine + [acceptor protein]-L-lysine = [E2 ubiquitin-conjugating enzyme]-L-cysteine + N(6)-ubiquitinyl-[acceptor protein]-L-lysine.. It functions in the pathway protein modification; protein ubiquitination. Its function is as follows. E3 ubiquitin-protein ligase that catalyzes 'Lys-27', 'Lys-48'- or 'Lys-63'-linked polyubiquitin chains formation and plays a role in different biological processes such as modulation of immune response, cytoskeletal dynamics or protein homeostasis. Inhibits IL2 and IL4 transcription, thereby playing an important role in the induction of the anergic phenotype, a long-term stable state of T-lymphocyte unresponsiveness to antigenic stimulation associated with the blockade of interleukin production. Ubiquitinates ARPC5 with 'Lys-48' linkages and COR1A with 'Lys-63' linkages leading to their degradation, down-regulation of these cytoskeletal components results in impaired lamellipodium formation and reduced accumulation of F-actin at the immunological synapse. Functions in the patterning of the dorsal ectoderm; sensitizes ectoderm to respond to neural-inducing signals. Plays a positive role in innate immune response by promoting 'Lys-63'-linked ubiquitination of TBK1 after RNA- or DNA-virus infection. Regulates alveolar macrophage activation and neutrophil infiltration by interacting with TLR4, targeting it for degradation, and inhibiting NF-kappa-B activation, hence decreasing pro-inflammatory cytokines. Negatively regulates the IL-3/STAT5 signaling pathway by facilitating 'Lys-27'-linked polyubiquitination of IL3RA leading to its degradation via lysosomal pathway. Directly regulates the N-glycosylation process in the endoplasmic reticulum by targeting the glycosyl-transferase RPN1 for ubiquitination and degradation. Other substrates targeted for degradation by RNF128 include transmembrane proteins CD40L, CD83 or the tetraspanin CD151. This chain is E3 ubiquitin-protein ligase RNF128 (RNF128), found in Homo sapiens (Human).